The chain runs to 251 residues: Ubiquinone/menaquinone biosynthesis C-methyltransferase UbiE (251 aa).

S-adenosyl-L-methionine contacts are provided by residues Thr-74, Asp-95, and 123-124 (NA).

Belongs to the class I-like SAM-binding methyltransferase superfamily. MenG/UbiE family.

The catalysed reaction is a 2-demethylmenaquinol + S-adenosyl-L-methionine = a menaquinol + S-adenosyl-L-homocysteine + H(+). The enzyme catalyses a 2-methoxy-6-(all-trans-polyprenyl)benzene-1,4-diol + S-adenosyl-L-methionine = a 5-methoxy-2-methyl-3-(all-trans-polyprenyl)benzene-1,4-diol + S-adenosyl-L-homocysteine + H(+). The protein operates within quinol/quinone metabolism; menaquinone biosynthesis; menaquinol from 1,4-dihydroxy-2-naphthoate: step 2/2. Its pathway is cofactor biosynthesis; ubiquinone biosynthesis. Its function is as follows. Methyltransferase required for the conversion of demethylmenaquinol (DMKH2) to menaquinol (MKH2) and the conversion of 2-polyprenyl-6-methoxy-1,4-benzoquinol (DDMQH2) to 2-polyprenyl-3-methyl-6-methoxy-1,4-benzoquinol (DMQH2). The sequence is that of Ubiquinone/menaquinone biosynthesis C-methyltransferase UbiE from Shewanella baltica (strain OS223).